We begin with the raw amino-acid sequence, 438 residues long: Neutral metalloprotease ShpI (438 aa).

The signal sequence occupies residues 1–26 (MINKKKLVTSLVTSSLLATFTLGSFA). The propeptide occupies 27–101 (DAHTYIINNE…KSENALSNSK (75 aa)). H242 contacts Zn(2+). E243 is an active-site residue. The Zn(2+) site is built by H246 and E269.

The protein belongs to the peptidase M30 family. Zn(2+) serves as cofactor. In terms of processing, several different N-terminal ends may be produced, the favored N-terminus is position 102.

It is found in the secreted. Its activity is regulated as follows. Inhibited by metal- and zinc-specific inhibitors, such as EDTA and 1,10-phenanthroline in vitro. Is resistant to all inhibitors of serine, cysteine and aspartic proteases. Functionally, protease that has a low substrate specificity. Catalyzes the hydrolysis of glucagon, melittin and oxidized beta-insulin at various positions in vitro. Is not able to cleave elastin or the synthetic substrates FAGLA (a substrate for neutral proteinases) and FALGPA (a substrate for collagenase). This Staphylococcus hyicus protein is Neutral metalloprotease ShpI.